A 591-amino-acid chain; its full sequence is Frizzled and smoothened-like protein F (591 aa).

The N-terminal stretch at 1–17 is a signal peptide; that stretch reads MKILIIFIIFIISYISG. The Extracellular segment spans residues 18 to 244; the sequence is FEIPKGFGIG…KWDQLLTMSK (227 aa). Residues 30–177 form the FZ domain; it reads IPDAECLNYI…GTFAVPCSDP (148 aa). Disulfide bonds link Cys35-Cys105, Cys48-Cys98, and Cys123-Cys174. N-linked (GlcNAc...) asparagine glycosylation is found at Asn167, Asn187, Asn202, and Asn230. The chain crosses the membrane as a helical span at residues 245-265; sequence ILSTISFILSLYNVLTFGIIN. Residues 266–275 are Cytoplasmic-facing; sequence KKVSDPHKCT. The chain crosses the membrane as a helical span at residues 276-296; it reads CFFSGSIALVNLCDIITYGIG. Residues 297 to 321 are Extracellular-facing; sequence YEELLCPEPGRSAKQQLDPVCGLTG. Residues 322 to 342 form a helical membrane-spanning segment; it reads AFFHLGITYCVLWSMTMGLVL. The Cytoplasmic portion of the chain corresponds to 343-353; the sequence is YCSVKRQKWFK. The chain crosses the membrane as a helical span at residues 354–374; it reads FNYFLIGNTTFTITTVVIAAA. The Extracellular segment spans residues 375–397; it reads TSKFEAGLGSIECWIRDRWYAIS. Residues 398–418 traverse the membrane as a helical segment; sequence LFWIPCGIALLIGSFCIIAVI. Over 419–442 the chain is Cytoplasmic; that stretch reads HEVYKTSKKSISNRNDLLQRELKP. Residues 443-463 traverse the membrane as a helical segment; sequence LLIVIFISGSFLYLFIFFFDI. At 464–495 the chain is on the extracellular side; it reads ERKFGGYRSAVEDYVLCLLNGSQEECFTTGPS. Asn483 carries N-linked (GlcNAc...) asparagine glycosylation. The chain crosses the membrane as a helical span at residues 496-516; the sequence is YVPYFLFYLVIRWFGIIFFLF. Residues 517 to 591 are Cytoplasmic-facing; the sequence is YGTSNIARKI…AVELESIKIN (75 aa). Low complexity predominate over residues 538–571; sequence SSISPKSTPKSSPKNSDSKINSNSTNNNNMILND. Residues 538 to 573 form a disordered region; sequence SSISPKSTPKSSPKNSDSKINSNSTNNNNMILNDNN.

Belongs to the G-protein coupled receptor Fz/Smo family.

The protein localises to the membrane. This Dictyostelium discoideum (Social amoeba) protein is Frizzled and smoothened-like protein F (fslF).